We begin with the raw amino-acid sequence, 282 residues long: Deoxyribonuclease-1 (282 aa).

Residues 1 to 20 form the signal peptide; it reads MARLVLELLAAALLLRVAAT. A glycan (N-linked (GlcNAc...) asparagine) is linked at Asn-38. Residue Glu-98 is part of the active site. Cysteines 121 and 124 form a disulfide. The active site involves His-154. Cysteines 193 and 229 form a disulfide.

Belongs to the DNase I family. It depends on Ca(2+) as a cofactor. Mg(2+) is required as a cofactor. N-glycosylated.

It localises to the secreted. The protein localises to the zymogen granule. The protein resides in the nucleus envelope. It catalyses the reaction Endonucleolytic cleavage to 5'-phosphodinucleotide and 5'-phosphooligonucleotide end-products.. Functionally, serum endocuclease secreted into body fluids by a wide variety of exocrine and endocrine organs. Expressed by non-hematopoietic tissues and preferentially cleaves protein-free DNA. Among other functions, seems to be involved in cell death by apoptosis. Binds specifically to G-actin and blocks actin polymerization. In Gallus gallus (Chicken), this protein is Deoxyribonuclease-1 (DNASE1).